A 1905-amino-acid polypeptide reads, in one-letter code: Alpha-2-macroglobulin (1905 aa).

The N-terminal stretch at 1–21 (MNKQYFLSLFSTLAVALTLSG) is a signal peptide. A lipid anchor (N-palmitoyl cysteine) is attached at C22. A lipid anchor (S-diacylglycerol cysteine) is attached at C22. The segment at residues 1438-1441 (CTEQ) is a cross-link (isoglutamyl cysteine thioester (Cys-Gln)).

Belongs to the protease inhibitor I39 (alpha-2-macroglobulin) family. Bacterial alpha-2-macroglobulin subfamily.

The protein resides in the cell membrane. In terms of biological role, protects the bacterial cell from host peptidases. The protein is Alpha-2-macroglobulin of Pasteurella multocida (strain Pm70).